The primary structure comprises 689 residues: Elongation factor G (689 aa).

One can recognise a tr-type G domain in the interval 9 to 283 (AKFRNIGIMA…AIIEFMPSPL (275 aa)). GTP contacts are provided by residues 18–25 (AHIDAGKT), 82–86 (DTPGH), and 136–139 (NKMD).

The protein belongs to the TRAFAC class translation factor GTPase superfamily. Classic translation factor GTPase family. EF-G/EF-2 subfamily.

Its subcellular location is the cytoplasm. Its function is as follows. Catalyzes the GTP-dependent ribosomal translocation step during translation elongation. During this step, the ribosome changes from the pre-translocational (PRE) to the post-translocational (POST) state as the newly formed A-site-bound peptidyl-tRNA and P-site-bound deacylated tRNA move to the P and E sites, respectively. Catalyzes the coordinated movement of the two tRNA molecules, the mRNA and conformational changes in the ribosome. The chain is Elongation factor G from Clostridium botulinum (strain 657 / Type Ba4).